The following is a 323-amino-acid chain: MNAITLVHSGHVPVMLHEVLEALSPRAGGRYLDGTFGGGGYARAILNAADCTLDAIDRDPAAIERGNAMAVQANGRLRMHQGTFGDMEALAGAEGPFDGIVLDLGVSSFQIDQAERGFSFRNDGPLDMRMGSDGPSAADLVNTCKEAELADILYRYGEEKLSRRIARAIVAARAEAPITTTGQLAHIIRCCVPRDRANIDPATRSFQGLRIAVNDELGELERALEAAPRLLAPGGIFVVVTFHSLEDRLAKRAMAVLAGRTGNPSRYEPAPLRQEAPAFSLLYSRPLSATDEESRENPRARSARLRALVCNPAPKMPVSGMPS.

S-adenosyl-L-methionine is bound by residues 39–41 (GGY), aspartate 57, phenylalanine 84, aspartate 103, and glutamine 110.

It belongs to the methyltransferase superfamily. RsmH family.

The protein localises to the cytoplasm. It carries out the reaction cytidine(1402) in 16S rRNA + S-adenosyl-L-methionine = N(4)-methylcytidine(1402) in 16S rRNA + S-adenosyl-L-homocysteine + H(+). In terms of biological role, specifically methylates the N4 position of cytidine in position 1402 (C1402) of 16S rRNA. This Gluconobacter oxydans (strain 621H) (Gluconobacter suboxydans) protein is Ribosomal RNA small subunit methyltransferase H.